Consider the following 268-residue polypeptide: MEMO1 family protein Ta0237 (268 aa).

The protein belongs to the MEMO1 family.

The sequence is that of MEMO1 family protein Ta0237 from Thermoplasma acidophilum (strain ATCC 25905 / DSM 1728 / JCM 9062 / NBRC 15155 / AMRC-C165).